Reading from the N-terminus, the 199-residue chain is NAD(P)H dehydrogenase (quinone) (199 aa).

The 187-residue stretch at 4-190 (MLVLYYSAYG…DDARFQGRRV (187 aa)) folds into the Flavodoxin-like domain. FMN contacts are provided by residues 10–15 (SAYGHM) and 78–80 (TRY). Tyr-12 provides a ligand contact to NAD(+). Residue Trp-98 participates in substrate binding. FMN is bound by residues 113 to 119 (STATQHG) and His-134. The tract at residues 158–181 (GAPYGMTTTADGDGSRQPSAQELD) is disordered. The segment covering 163–177 (MTTTADGDGSRQPSA) has biased composition (polar residues).

Belongs to the WrbA family. The cofactor is FMN.

The enzyme catalyses a quinone + NADH + H(+) = a quinol + NAD(+). It carries out the reaction a quinone + NADPH + H(+) = a quinol + NADP(+). The protein is NAD(P)H dehydrogenase (quinone) of Brucella ovis (strain ATCC 25840 / 63/290 / NCTC 10512).